We begin with the raw amino-acid sequence, 377 residues long: Putative glutamate--cysteine ligase 2 (377 aa).

It belongs to the glutamate--cysteine ligase type 2 family. YbdK subfamily.

It catalyses the reaction L-cysteine + L-glutamate + ATP = gamma-L-glutamyl-L-cysteine + ADP + phosphate + H(+). In terms of biological role, ATP-dependent carboxylate-amine ligase which exhibits weak glutamate--cysteine ligase activity. This is Putative glutamate--cysteine ligase 2 from Ralstonia pickettii (strain 12J).